The chain runs to 365 residues: MIKFLSALILLLVTTAAQAERIRDLTSVQGVRQNSLIGYGLVVGLDGTGDQTTQTPFTTQTLNNMLSQLGITVPTGTNMQLKNVAAVMVTASLPPFGRQGQTIDVVVSSMGNAKSLRGGTLLMTPLKGVDSQVYALAQGNILVGGAGASAGGSSVQVNQLNGGRITNGAVIERELPSQFGVGNTLNLQLNDEDFSMAQQIADTINRVRGYGSATALDARAIQVRVPSGNSSQVRFLADIQNMQVNVTPQDAKVVINSRTGSVVMNREVTLDSCAVAQGNLSVTVNRQANVSQPDTPFGGGQTVVTPQTQIDLRQSGGSLQSVRSSASLNNVVRALNALGATPIDLMSILQSMQSAGCLRAKLEII.

An N-terminal signal peptide occupies residues 1-19 (MIKFLSALILLLVTTAAQA).

Belongs to the FlgI family. As to quaternary structure, the basal body constitutes a major portion of the flagellar organelle and consists of four rings (L,P,S, and M) mounted on a central rod.

The protein localises to the periplasm. It is found in the bacterial flagellum basal body. In terms of biological role, assembles around the rod to form the L-ring and probably protects the motor/basal body from shearing forces during rotation. The polypeptide is Flagellar P-ring protein (Shigella flexneri serotype 5b (strain 8401)).